The chain runs to 293 residues: Ribosomal RNA small subunit methyltransferase H (293 aa).

Residues 31–33 (GGY), Asp49, Phe76, Asp97, and Gln104 contribute to the S-adenosyl-L-methionine site.

Belongs to the methyltransferase superfamily. RsmH family.

It localises to the cytoplasm. It carries out the reaction cytidine(1402) in 16S rRNA + S-adenosyl-L-methionine = N(4)-methylcytidine(1402) in 16S rRNA + S-adenosyl-L-homocysteine + H(+). Its function is as follows. Specifically methylates the N4 position of cytidine in position 1402 (C1402) of 16S rRNA. This Wolbachia sp. subsp. Drosophila simulans (strain wRi) protein is Ribosomal RNA small subunit methyltransferase H.